The primary structure comprises 346 residues: Dihydroorotate dehydrogenase (quinone) (346 aa).

FMN contacts are provided by residues 61-65 and threonine 85; that span reads AGLDK. Lysine 65 is a binding site for substrate. 110 to 114 is a substrate binding site; the sequence is NRMGF. 2 residues coordinate FMN: asparagine 138 and asparagine 171. Asparagine 171 provides a ligand contact to substrate. Serine 174 serves as the catalytic Nucleophile. Asparagine 176 lines the substrate pocket. FMN is bound by residues lysine 216 and threonine 244. Residue 245–246 participates in substrate binding; sequence NT. Residues glycine 267, glycine 296, and 317–318 contribute to the FMN site; that span reads YS.

The protein belongs to the dihydroorotate dehydrogenase family. Type 2 subfamily. Monomer. Requires FMN as cofactor.

It is found in the cell membrane. The catalysed reaction is (S)-dihydroorotate + a quinone = orotate + a quinol. It functions in the pathway pyrimidine metabolism; UMP biosynthesis via de novo pathway; orotate from (S)-dihydroorotate (quinone route): step 1/1. Functionally, catalyzes the conversion of dihydroorotate to orotate with quinone as electron acceptor. This chain is Dihydroorotate dehydrogenase (quinone), found in Marinomonas sp. (strain MWYL1).